A 522-amino-acid polypeptide reads, in one-letter code: Calcium-dependent protein kinase 4 (522 aa).

Residues 1–10 are compositionally biased toward polar residues; that stretch reads MGACFSSHTA. The disordered stretch occupies residues 1–43; it reads MGACFSSHTATAAADGGSGKRQQRKGDHKGKLPDGGGGEKEKE. G2 carries N-myristoyl glycine lipidation. Residues 29–43 show a composition bias toward basic and acidic residues; sequence KGKLPDGGGGEKEKE. The 261-residue stretch at 59–319 folds into the Protein kinase domain; that stretch reads YQVGRLLGHG…AAQALSHPWV (261 aa). Residues 65 to 73 and K88 each bind ATP; that span reads LGHGQFGYT. The active-site Proton acceptor is the D185. Residues 325-355 form an autoinhibitory domain region; the sequence is ASEIPVDISVLSNMRQFVKYSRFKQFALRAL. 4 consecutive EF-hand domains span residues 362–397, 399–434, 441–476, and 481–508; these read EELA…DLPW, LKGP…IHQM, RWGL…GLKG, and LLEE…ASMS. D375, D377, S379, S381, E386, D412, N414, D416, E423, D454, D456, D458, Y460, E465, D486, D488, D490, R492, and E497 together coordinate Ca(2+).

It belongs to the protein kinase superfamily. Ser/Thr protein kinase family. CDPK subfamily.

It is found in the membrane. The catalysed reaction is L-seryl-[protein] + ATP = O-phospho-L-seryl-[protein] + ADP + H(+). It carries out the reaction L-threonyl-[protein] + ATP = O-phospho-L-threonyl-[protein] + ADP + H(+). Its activity is regulated as follows. Activated by calcium. Autophosphorylation may play an important role in the regulation of the kinase activity. Its function is as follows. May play a role in signal transduction pathways that involve calcium as a second messenger. The sequence is that of Calcium-dependent protein kinase 4 from Oryza sativa subsp. japonica (Rice).